A 350-amino-acid polypeptide reads, in one-letter code: Lipoyl synthase, mitochondrial (350 aa).

Residues cysteine 83, cysteine 88, cysteine 94, cysteine 113, cysteine 117, cysteine 120, and serine 328 each coordinate [4Fe-4S] cluster. The Radical SAM core domain maps to 96 to 317 (GGESGTATAT…EKVGNELGFA (222 aa)).

It belongs to the radical SAM superfamily. Lipoyl synthase family. Requires [4Fe-4S] cluster as cofactor.

It localises to the mitochondrion. The enzyme catalyses [[Fe-S] cluster scaffold protein carrying a second [4Fe-4S](2+) cluster] + N(6)-octanoyl-L-lysyl-[protein] + 2 oxidized [2Fe-2S]-[ferredoxin] + 2 S-adenosyl-L-methionine + 4 H(+) = [[Fe-S] cluster scaffold protein] + N(6)-[(R)-dihydrolipoyl]-L-lysyl-[protein] + 4 Fe(3+) + 2 hydrogen sulfide + 2 5'-deoxyadenosine + 2 L-methionine + 2 reduced [2Fe-2S]-[ferredoxin]. It participates in protein modification; protein lipoylation via endogenous pathway; protein N(6)-(lipoyl)lysine from octanoyl-[acyl-carrier-protein]: step 2/2. Its function is as follows. Catalyzes the radical-mediated insertion of two sulfur atoms into the C-6 and C-8 positions of the octanoyl moiety bound to the lipoyl domains of lipoate-dependent enzymes, thereby converting the octanoylated domains into lipoylated derivatives. The sequence is that of Lipoyl synthase, mitochondrial from Trichoplax adhaerens (Trichoplax reptans).